The following is a 296-amino-acid chain: CCAAT/enhancer-binding protein beta (296 aa).

The tract at residues 1 to 22 is required for Lys-133 sumoylation; sequence MHRLLAWDAACLPPPPAAFRPM. Arg-3 bears the Asymmetric dimethylarginine; by CARM1 mark. The tract at residues 22-104 is required for MYC transcriptional repression; that stretch reads MEVANFYYEP…YGAKPSKKPA (83 aa). Lys-39 carries the N6-acetyllysine; alternate modification. Lys-39 bears the N6-methylated lysine; alternate mark. N6-acetyllysine; by KAT2A and KAT2B is present on residues Lys-98 and Lys-101. Lys-102 is modified (N6-acetyllysine; by KAT2A and KAT2B; alternate). Glycyl lysine isopeptide (Lys-Gly) (interchain with G-Cter in SUMO2); alternate cross-links involve residues Lys-102 and Lys-133. Residue Lys-133 forms a Glycyl lysine isopeptide (Lys-Gly) (interchain with G-Cter in SUMO); alternate linkage. Residue Lys-144 forms a Glycyl lysine isopeptide (Lys-Gly) (interchain with G-Cter in SUMO2) linkage. The segment at 171-199 is disordered; that stretch reads SGSSGSLSTSSSSSPPGTPSPADAKAAPA. Thr-179 is subject to Phosphothreonine; by GSK3-beta. O-linked (GlcNAc) serine glycans are attached at residues Ser-180 and Ser-181. The residue at position 184 (Ser-184) is a Phosphoserine; by GSK3-beta. Position 188 is a phosphothreonine; by RPS6KA1, CDK2 and MAPK (Thr-188). Residues Lys-211 and Lys-213 each participate in a glycyl lysine isopeptide (Lys-Gly) (interchain with G-Cter in SUMO2) cross-link. Position 217 is a phosphothreonine; by RPS6KA1 and PKC/PRKCA (Thr-217). Positions 222–285 constitute a bZIP domain; the sequence is SDEYKMRRER…STLRNLFKQL (64 aa). Residues 226-246 form a basic motif region; that stretch reads KMRRERNNIAVRKSRDKAKMR. Residue Ser-239 is modified to Phosphoserine; by PKC/PRKCA. The interval 248–255 is leucine-zipper; sequence LETQHKVL. Ser-276 carries the phosphoserine; by CaMK2 modification. Residue Lys-283 forms a Glycyl lysine isopeptide (Lys-Gly) (interchain with G-Cter in SUMO2) linkage.

Belongs to the bZIP family. C/EBP subfamily. Binds DNA as a homodimer and as a heterodimer. Interacts with ATF4. Binds DNA as a heterodimer with ATF4. Interacts with MYB; within the complex, MYB and CEBPB bind to different promoter regions. Can form stable heterodimers with CEBPA, CEBPD and CEBPE. Interacts with SIX1. Isoform 2 and isoform 3 also form heterodimers. Interacts with TRIM28 and PTGES2. Interacts with PRDM16. Interacts with CCDC85B. Forms a complex with THOC5. Interacts with ZNF638; this interaction increases transcriptional activation. Interacts with CIDEA and CIDEC. Interaction with CIDEA increases transcriptional activation of a subset of CEBPB downstream target genes, including ID2, IGF1, PRLR, SOCS1, SOCS3, XDH. Interaction with CIDEC increases transcriptional activation of SOCS1, SOCS3, TGFB1, TGFBR1, ID2 and XDH. Interacts with DDIT3/CHOP. Interacts with EP300; recruits EP300 to chromatin. Interacts with RORA; the interaction disrupts interaction with EP300. Interacts (not methylated) with MED23, MED26, SMARCA2, SMARCB1 and SMARCC1. Interacts with KAT2A and KAT2B. Interacts with ATF5; EP300 is required for ATF5 and CEBPB interaction and DNA binding. Interacts with NFE2L1; the heterodimer represses expression of DSPP during odontoblast differentiation. Post-translationally, sumoylated by polymeric chains of SUMO2 or SUMO3. Sumoylation at Lys-133 is required for inhibition of T-cells proliferation. In adipocytes, sumoylation at Lys-133 by PIAS1 leads to ubiquitination and subsequent proteasomal degradation. Desumoylated by SENP2, which abolishes ubiquitination and stabilizes protein levels. In terms of processing, ubiquitinated, leading to proteasomal degradation. Phosphorylated at Thr-188 by MAPK and CDK2, serves to prime phosphorylation at Thr-179 and Ser-184 by GSK3B and acquire DNA-binding as well as transactivation activities, required to induce adipogenesis. MAPK and CDK2 act sequentially to maintain Thr-188 in the primed phosphorylated state during mitotical cloning expansion and thereby progression of terminal differentiation. Phosphorylation at Thr-217 enhances transactivation activity. Phosphorylation at Ser-276 in response to calcium increases transactivation activity. Phosphorylated at Thr-188 by RPS6KA1. Post-translationally, O-glycosylated, glycosylation at Ser-180 and Ser-181 prevents phosphorylation on Thr-188, Ser-184 and Thr-179 and DNA binding activity which delays the adipocyte differentiation program. In terms of processing, acetylated. Acetylation at Lys-39 is an important and dynamic regulatory event that contributes to its ability to transactivate target genes, including those associated with adipogenesis and adipocyte function. Deacetylation by HDAC1 represses its transactivation activity. Acetylated by KAT2A and KAT2B within a cluster of lysine residues between amino acids 98-102, this acetylation is strongly induced by glucocorticoid treatment and enhances transactivation activity. Methylated. Methylation at Arg-3 by CARM1 and at Lys-39 by EHMT2, inhibits transactivation activity. Methylation is probably inhibited by phosphorylation at Thr-188. In terms of tissue distribution, abundantly expressed in myoblasts. Enriched in brown adipose tissue (BAT) versus white adipose tissue (WAT). Expressed in hepatocytes (at protein level). Expressed in T lymphocytes. The expression in granulosa cells of antral follicles is induced by luteinizing hormone. Expressed in chondrocytes and osteoblasts (at protein level).

It localises to the nucleus. The protein localises to the cytoplasm. In terms of biological role, important transcription factor regulating the expression of genes involved in immune and inflammatory responses. Also plays a significant role in adipogenesis, as well as in the gluconeogenic pathway, liver regeneration, and hematopoiesis. The consensus recognition site is 5'-T[TG]NNGNAA[TG]-3'. Its functional capacity is governed by protein interactions and post-translational protein modifications. During early embryogenesis, plays essential and redundant roles with CEBPA. Has a promitotic effect on many cell types such as hepatocytes and adipocytes but has an antiproliferative effect on T-cells by repressing MYC expression, facilitating differentiation along the T-helper 2 lineage. Binds to regulatory regions of several acute-phase and cytokines genes and plays a role in the regulation of acute-phase reaction and inflammation. Also plays a role in intracellular bacteria killing. During adipogenesis, is rapidly expressed and, after activation by phosphorylation, induces CEBPA and PPARG, which turn on the series of adipocyte genes that give rise to the adipocyte phenotype. The delayed transactivation of the CEBPA and PPARG genes by CEBPB appears necessary to allow mitotic clonal expansion and thereby progression of terminal differentiation. Essential for female reproduction because of a critical role in ovarian follicle development. Restricts osteoclastogenesis. Together with NFE2L1; represses expression of DSPP during odontoblast differentiation. Functionally, essential for gene expression induction in activated macrophages. Plays a major role in immune responses such as CD4(+) T-cell response, granuloma formation and endotoxin shock. Not essential for intracellular bacteria killing. Its function is as follows. Acts as a dominant negative through heterodimerization with isoform 2. Promotes osteoblast differentiation and osteoclastogenesis. The sequence is that of CCAAT/enhancer-binding protein beta from Mus musculus (Mouse).